The primary structure comprises 376 residues: Glutamate 5-kinase (376 aa).

Residue lysine 18 participates in ATP binding. Positions 58, 145, and 157 each coordinate substrate. ATP contacts are provided by residues 177–178 (SD) and 218–224 (TGGMASK). The 79-residue stretch at 280–358 (TGALTLDAGA…SELPGELRRP (79 aa)) folds into the PUA domain.

This sequence belongs to the glutamate 5-kinase family.

It localises to the cytoplasm. It catalyses the reaction L-glutamate + ATP = L-glutamyl 5-phosphate + ADP. It participates in amino-acid biosynthesis; L-proline biosynthesis; L-glutamate 5-semialdehyde from L-glutamate: step 1/2. Its function is as follows. Catalyzes the transfer of a phosphate group to glutamate to form L-glutamate 5-phosphate. This chain is Glutamate 5-kinase, found in Mycobacterium tuberculosis (strain CDC 1551 / Oshkosh).